A 460-amino-acid polypeptide reads, in one-letter code: Ribosomal protein uS12 methylthiotransferase RimO (460 aa).

In terms of domain architecture, MTTase N-terminal spans 17-128 (PAVAVLHLGC…IVQVIQRAER (112 aa)). [4Fe-4S] cluster contacts are provided by C26, C62, C91, C166, C170, and C173. The Radical SAM core domain maps to 152–381 (TTHAPVAYLR…MQLQQGIAFR (230 aa)). Positions 384–450 (REQVGQVVPV…PYDLFGQVVE (67 aa)) constitute a TRAM domain.

This sequence belongs to the methylthiotransferase family. RimO subfamily. [4Fe-4S] cluster serves as cofactor.

The protein resides in the cytoplasm. The catalysed reaction is L-aspartate(89)-[ribosomal protein uS12]-hydrogen + (sulfur carrier)-SH + AH2 + 2 S-adenosyl-L-methionine = 3-methylsulfanyl-L-aspartate(89)-[ribosomal protein uS12]-hydrogen + (sulfur carrier)-H + 5'-deoxyadenosine + L-methionine + A + S-adenosyl-L-homocysteine + 2 H(+). Catalyzes the methylthiolation of an aspartic acid residue of ribosomal protein uS12. The chain is Ribosomal protein uS12 methylthiotransferase RimO from Synechococcus sp. (strain JA-3-3Ab) (Cyanobacteria bacterium Yellowstone A-Prime).